Here is a 418-residue protein sequence, read N- to C-terminus: Serine hydroxymethyltransferase (418 aa).

(6S)-5,6,7,8-tetrahydrofolate contacts are provided by residues Leu121 and 125-127 (GHL). Lys230 is modified (N6-(pyridoxal phosphate)lysine). 356 to 358 (SPF) provides a ligand contact to (6S)-5,6,7,8-tetrahydrofolate.

It belongs to the SHMT family. As to quaternary structure, homodimer. The cofactor is pyridoxal 5'-phosphate.

It is found in the cytoplasm. The enzyme catalyses (6R)-5,10-methylene-5,6,7,8-tetrahydrofolate + glycine + H2O = (6S)-5,6,7,8-tetrahydrofolate + L-serine. The protein operates within one-carbon metabolism; tetrahydrofolate interconversion. It participates in amino-acid biosynthesis; glycine biosynthesis; glycine from L-serine: step 1/1. Catalyzes the reversible interconversion of serine and glycine with tetrahydrofolate (THF) serving as the one-carbon carrier. This reaction serves as the major source of one-carbon groups required for the biosynthesis of purines, thymidylate, methionine, and other important biomolecules. Also exhibits THF-independent aldolase activity toward beta-hydroxyamino acids, producing glycine and aldehydes, via a retro-aldol mechanism. The sequence is that of Serine hydroxymethyltransferase from Pseudoalteromonas translucida (strain TAC 125).